The primary structure comprises 300 residues: MYNMMETEIKSPIPQSNTGSVTGGKNNSANDQDRVKRPMNAFMVWSRGQRRKMAQENPKMHNSEISKRLGADWKLLTDAEKRPFIDEAKRLRAMHMKEHPDYKYRPRRKTKTLLKKDKYSLPGGLLAPGANAVNNAVSVGQRMDYTHMNGWTNSAYSLMQDQLAYPQHPSMNSPQIQQMHRYDMAGLQYPMMSTAQTYMNAASTYSSMSPAYTQQTSSAMGLGSMASVCKTEPSSPPPAITSHSQRACLGDLRDMISMYLPPGGDSADHSSLQTSRLHSVHPHYQSAGTGVNGTLPLTHI.

Positions 1-35 are disordered; it reads MYNMMETEIKSPIPQSNTGSVTGGKNNSANDQDRV. The segment covering 13 to 30 has biased composition (polar residues); that stretch reads IPQSNTGSVTGGKNNSAN. The HMG box DNA-binding region spans 35–103; sequence VKRPMNAFMV…MHMKEHPDYK (69 aa). At S235 the chain carries Phosphoserine. Positions 251 to 262 match the 9aaTAD motif; that stretch reads DLRDMISMYLPP.

It localises to the nucleus. Transcriptional activator. The protein is Transcription factor Sox-3 of Danio rerio (Zebrafish).